The following is a 161-amino-acid chain: FAD synthase (161 aa).

ATP contacts are provided by residues 19–20, 24–27, Asp-106, and Tyr-133; these read TF and HPGH.

This sequence belongs to the archaeal FAD synthase family. In terms of assembly, homodimer. Requires a divalent metal cation as cofactor.

It catalyses the reaction FMN + ATP + H(+) = FAD + diphosphate. It functions in the pathway cofactor biosynthesis; FAD biosynthesis; FAD from FMN: step 1/1. Its function is as follows. Catalyzes the transfer of the AMP portion of ATP to flavin mononucleotide (FMN) to produce flavin adenine dinucleotide (FAD) coenzyme. This is FAD synthase from Methanothermobacter marburgensis (strain ATCC BAA-927 / DSM 2133 / JCM 14651 / NBRC 100331 / OCM 82 / Marburg) (Methanobacterium thermoautotrophicum).